The chain runs to 206 residues: Methyl-coenzyme M reductase operon protein C (206 aa).

MCR is composed of three subunits: alpha, beta, and gamma. The function of proteins C and D is not known.

In Methanosarcina barkeri (strain Fusaro / DSM 804), this protein is Methyl-coenzyme M reductase operon protein C (mcrC).